We begin with the raw amino-acid sequence, 465 residues long: Chromosomal replication initiator protein DnaA (465 aa).

Residues 1-84 (MSLSLWQQCL…RFEVGSKPLV (84 aa)) are domain I, interacts with DnaA modulators. Positions 84–128 (VQAISQPAQPHHKQVSAAPQQQVRSAPVRPSWDNSPAQAEHTYRS) are domain II. The tract at residues 91 to 120 (AQPHHKQVSAAPQQQVRSAPVRPSWDNSPA) is disordered. Residues 129–345 (NVNPKHTFDN…GALNRVIANA (217 aa)) are domain III, AAA+ region. 4 residues coordinate ATP: Gly-173, Gly-175, Lys-176, and Thr-177. Residues 346–465 (NFTGRSITID…FSNLIRTLSS (120 aa)) form a domain IV, binds dsDNA region.

This sequence belongs to the DnaA family. In terms of assembly, oligomerizes as a right-handed, spiral filament on DNA at oriC.

Its subcellular location is the cytoplasm. Plays an essential role in the initiation and regulation of chromosomal replication. ATP-DnaA binds to the origin of replication (oriC) to initiate formation of the DNA replication initiation complex once per cell cycle. Binds the DnaA box (a 9 base pair repeat at the origin) and separates the double-stranded (ds)DNA. Forms a right-handed helical filament on oriC DNA; dsDNA binds to the exterior of the filament while single-stranded (ss)DNA is stabiized in the filament's interior. The ATP-DnaA-oriC complex binds and stabilizes one strand of the AT-rich DNA unwinding element (DUE), permitting loading of DNA polymerase. After initiation quickly degrades to an ADP-DnaA complex that is not apt for DNA replication. Binds acidic phospholipids. This is Chromosomal replication initiator protein DnaA from Pectobacterium carotovorum subsp. carotovorum (strain PC1).